We begin with the raw amino-acid sequence, 268 residues long: Undecaprenyl-diphosphatase (268 aa).

7 helical membrane passes run 5 to 25 (TIAQALMLGVLEGFTEFIPVS), 43 to 63 (GKAFEILIQLGAILAVLSVYA), 84 to 104 (LGILIAFLPAAIIGVVAYQII), 107 to 127 (VLFETPLLICTMLILGGIVLL), 184 to 204 (AAEFSFFLAMPTMAGAFAYDL), 214 to 234 (ADLQIIGVGFIAAFVAAVLVV), and 247 to 267 (ALFGWWRIFIGVLGLIGVLVL).

It belongs to the UppP family.

The protein resides in the cell inner membrane. The catalysed reaction is di-trans,octa-cis-undecaprenyl diphosphate + H2O = di-trans,octa-cis-undecaprenyl phosphate + phosphate + H(+). Its function is as follows. Catalyzes the dephosphorylation of undecaprenyl diphosphate (UPP). Confers resistance to bacitracin. The polypeptide is Undecaprenyl-diphosphatase (Chelativorans sp. (strain BNC1)).